The primary structure comprises 446 residues: Inward rectifier potassium channel 4 (446 aa).

At methionine 1–tryptophan 55 the chain is on the cytoplasmic side. A helical transmembrane segment spans residues arginine 56–isoleucine 80. The Extracellular segment spans residues alanine 81 to glycine 120. Residues proline 91–alanine 111 are val/Gly/Ala/Pro stretch. An intramembrane region (helical; Pore-forming) is located at residues phenylalanine 121–glutamine 132. Positions threonine 133–phenylalanine 139 form an intramembrane region, pore-forming. Positions threonine 134–phenylalanine 139 match the Selectivity filter motif. Residues arginine 140 to leucine 148 are Extracellular-facing. A helical transmembrane segment spans residues alanine 149–threonine 170. Over isoleucine 171 to isoleucine 446 the chain is Cytoplasmic. The PDZ-binding signature appears at serine 444 to isoleucine 446.

This sequence belongs to the inward rectifier-type potassium channel (TC 1.A.2.1) family. KCNJ4 subfamily. As to quaternary structure, homomultimeric and heteromultimeric association with KCNJ2 and KCNJ12. Interacts with DLG2 and DLG4. Associates, via its PDZ-recognition domain, with a complex containing LIN7A, LIN7B, LIN7C, DLG1, CASK and APBA1. Interacts with TAX1BP3. TAX1BP3 competes with LIN7 family members for KCNJ4 binding. In terms of tissue distribution, detected in kidney distal convoluted tubules (at protein level). Widely expressed throughout the brain. Also found in some peripheral tissues.

Its subcellular location is the cell membrane. It is found in the cytoplasmic vesicle membrane. It localises to the postsynaptic cell membrane. The catalysed reaction is K(+)(in) = K(+)(out). Its function is as follows. Inward rectifier potassium channels are characterized by a greater tendency to allow potassium to flow into the cell rather than out of it. Their voltage dependence is regulated by the concentration of extracellular potassium; as external potassium is raised, the voltage range of the channel opening shifts to more positive voltages. The inward rectification is mainly due to the blockage of outward current by internal magnesium. Can be blocked by extracellular barium and cesium. The polypeptide is Inward rectifier potassium channel 4 (Kcnj4) (Rattus norvegicus (Rat)).